The following is a 607-amino-acid chain: Elongation factor 4 (607 aa).

One can recognise a tr-type G domain in the interval 11-193 (EKIRNFSIIA…QIVEKVPAPQ (183 aa)). Residues 23-28 (DHGKST) and 140-143 (NKID) contribute to the GTP site.

It belongs to the TRAFAC class translation factor GTPase superfamily. Classic translation factor GTPase family. LepA subfamily.

It localises to the cell membrane. The catalysed reaction is GTP + H2O = GDP + phosphate + H(+). Its function is as follows. Required for accurate and efficient protein synthesis under certain stress conditions. May act as a fidelity factor of the translation reaction, by catalyzing a one-codon backward translocation of tRNAs on improperly translocated ribosomes. Back-translocation proceeds from a post-translocation (POST) complex to a pre-translocation (PRE) complex, thus giving elongation factor G a second chance to translocate the tRNAs correctly. Binds to ribosomes in a GTP-dependent manner. The polypeptide is Elongation factor 4 (Lactococcus lactis subsp. cremoris (strain MG1363)).